The chain runs to 248 residues: Meiotically up-regulated gene 110 protein (248 aa).

Residues 23 to 43 (LRFVFWFSVLIPIFFIALIII) form a helical membrane-spanning segment.

It localises to the membrane. Its function is as follows. Has a role in meiosis. This Schizosaccharomyces pombe (strain 972 / ATCC 24843) (Fission yeast) protein is Meiotically up-regulated gene 110 protein (mug110).